A 1029-amino-acid chain; its full sequence is uncharacterized protein (1029 aa).

Positions 1–23 are enriched in basic and acidic residues; it reads MREWCMLRESRTNTPRRAAERGK. Residues 1–31 are disordered; the sequence is MREWCMLRESRTNTPRRAAERGKRPGGSSVR. The Guanylate cyclase domain maps to 39–168; sequence TALCYDLVGS…AALAMAARLQ (130 aa). Residue 261–268 coordinates ATP; sequence GDAGIGKS.

This is an uncharacterized protein from Rhizobium meliloti (strain 1021) (Ensifer meliloti).